A 553-amino-acid chain; its full sequence is Solute carrier family 22 member 4 (553 aa).

Residues 1 to 20 (MRDYDEVIAFLGEWGPFQRL) lie on the Cytoplasmic side of the membrane. The helical transmembrane segment at 21-41 (IFFLLSASIIPNGFNGMSVVF) threads the bilayer. The Extracellular segment spans residues 42-142 (LAGTPEHRCL…NLVCEDDWKT (101 aa)). N-linked (GlcNAc...) asparagine glycosylation is found at Asn-57, Asn-64, and Asn-91. The helical transmembrane segment at 143 to 163 (PLTTSLFFVGVLCGSFVSGQL) threads the bilayer. The Cytoplasmic portion of the chain corresponds to 164-171 (SDRFGRKK). A helical transmembrane segment spans residues 172–192 (VLFATMAVQTGFSFVQIFSTN). Residues 193 to 197 (WEMFT) are Extracellular-facing. Residues 198-218 (VLFAIVGMGQISNYVVAFILG) form a helical membrane-spanning segment. ATP is bound at residue 218–225 (GTEILSKS). Over 219–232 (TEILSKSVRIIFST) the chain is Cytoplasmic. Residues 233–253 (LGVCTFFAIGYMVLPLFAYFI) traverse the membrane as a helical segment. The Extracellular portion of the chain corresponds to 254–257 (RDWR). A helical transmembrane segment spans residues 258 to 278 (MLLLALTLPGLFCVPLWWFIP). Residues 279–339 (ESPRWLISQR…IILDLFRTRN (61 aa)) are Cytoplasmic-facing. The chain crosses the membrane as a helical span at residues 340-360 (IATITVMAVMLWMLTSVGYFA). The Extracellular portion of the chain corresponds to 361 to 373 (LSLNVPNLHGDVY). The chain crosses the membrane as a helical span at residues 374 to 394 (LNCFLSGLIEVPAYFTAWLLL). Residues 395-400 (RTLPRR) are Cytoplasmic-facing. The chain crosses the membrane as a helical span at residues 401–421 (YIIAGVLFWGGGVLLLIQVVP). Residues 422 to 428 (EDYNFVS) lie on the Extracellular side of the membrane. A helical membrane pass occupies residues 429–449 (IGLVMLGKFGITSAFSMLYVF). At 450 to 462 (TAELYPTLVRNMA) the chain is on the cytoplasmic side. The helical transmembrane segment at 463 to 483 (VGITSMASRVGSIIAPYFVYL) threads the bilayer. Residues 484–488 (GAYNR) are Extracellular-facing. A helical membrane pass occupies residues 489 to 509 (LLPYILMGSLTVLIGIITLFF). At 510–553 (PESFGVTLPENLEQMQKVRGFRCGKKSTVSVDREESPKVLITAF) the chain is on the cytoplasmic side.

Belongs to the major facilitator (TC 2.A.1) superfamily. Organic cation transporter (TC 2.A.1.19) family. As to quaternary structure, interacts with PDZK1. As to expression, expressed in kidney. Expressed in small intestines. Expressed in liver in non-parenchymal liver tissue such as sinusoidal vessels. Weakly expressed in lung and brain. Expressed in testis and spleen. Expressed in heart.

It localises to the apical cell membrane. It is found in the mitochondrion membrane. Its subcellular location is the basal cell membrane. The catalysed reaction is ergothioneine(out) + Na(+)(out) = ergothioneine(in) + Na(+)(in). It catalyses the reaction acetylcholine(in) = acetylcholine(out). The enzyme catalyses (R)-carnitine(out) + Na(+)(out) = (R)-carnitine(in) + Na(+)(in). It carries out the reaction glycine betaine(out) + Na(+)(out) = glycine betaine(in) + Na(+)(in). Its activity is regulated as follows. Allosterically activated by intracellular ATP. In terms of biological role, transporter that mediates the transport of endogenous and microbial zwitterions and organic cations. Functions as a Na(+)-dependent and pH-dependent high affinity microbial symporter of potent food-derived antioxidant ergothioeine. Transports one sodium ion with one ergothioeine molecule. Involved in the absorption of ergothioneine from the luminal/apical side of the small intestine and renal tubular cells, and into non-parenchymal liver cells, thereby contributing to maintain steady-state ergothioneine level in the body. Also mediates the bidirectional transport of acetycholine, although the exact transport mechanism has not been fully identified yet. Most likely exports anti-inflammatory acetylcholine in non-neuronal tissues, thereby contributing to the non-neuronal cholinergic system. Displays a general physiological role linked to better survival by controlling inflammation and oxidative stress, which may be related to ergothioneine and acetycholine transports. May also function as a low-affinity Na(+)-dependent transporter of L-carnitine through the mitochondrial membrane, thereby maintaining intracellular carnitine homeostasis. May contribute to regulate the transport of cationic compounds in testis across the blood-testis-barrier. This chain is Solute carrier family 22 member 4, found in Mus musculus (Mouse).